A 353-amino-acid chain; its full sequence is Thiamine-phosphate synthase (353 aa).

The segment at 1 to 128 (MELMVVEADA…ASTAAEIRYG (128 aa)) is unknown. The thiamine-phosphate synthase stretch occupies residues 129–353 (LYDLEVRILE…ASRTLLQTLA (225 aa)). Residues 185-189 (QYRRK) and asparagine 217 each bind 4-amino-2-methyl-5-(diphosphooxymethyl)pyrimidine. Mg(2+)-binding residues include aspartate 218 and aspartate 237. Residue serine 256 coordinates 4-amino-2-methyl-5-(diphosphooxymethyl)pyrimidine. 282 to 284 (TKT) provides a ligand contact to 2-[(2R,5Z)-2-carboxy-4-methylthiazol-5(2H)-ylidene]ethyl phosphate. Lysine 285 contacts 4-amino-2-methyl-5-(diphosphooxymethyl)pyrimidine. Position 312 (glycine 312) interacts with 2-[(2R,5Z)-2-carboxy-4-methylthiazol-5(2H)-ylidene]ethyl phosphate.

Belongs to the thiamine-phosphate synthase family. The cofactor is Mg(2+).

The enzyme catalyses 2-[(2R,5Z)-2-carboxy-4-methylthiazol-5(2H)-ylidene]ethyl phosphate + 4-amino-2-methyl-5-(diphosphooxymethyl)pyrimidine + 2 H(+) = thiamine phosphate + CO2 + diphosphate. The catalysed reaction is 2-(2-carboxy-4-methylthiazol-5-yl)ethyl phosphate + 4-amino-2-methyl-5-(diphosphooxymethyl)pyrimidine + 2 H(+) = thiamine phosphate + CO2 + diphosphate. It carries out the reaction 4-methyl-5-(2-phosphooxyethyl)-thiazole + 4-amino-2-methyl-5-(diphosphooxymethyl)pyrimidine + H(+) = thiamine phosphate + diphosphate. It participates in cofactor biosynthesis; thiamine diphosphate biosynthesis; thiamine phosphate from 4-amino-2-methyl-5-diphosphomethylpyrimidine and 4-methyl-5-(2-phosphoethyl)-thiazole: step 1/1. Its function is as follows. Condenses 4-methyl-5-(beta-hydroxyethyl)thiazole monophosphate (THZ-P) and 2-methyl-4-amino-5-hydroxymethyl pyrimidine pyrophosphate (HMP-PP) to form thiamine monophosphate (TMP). The chain is Thiamine-phosphate synthase from Synechococcus sp. (strain CC9311).